Here is a 447-residue protein sequence, read N- to C-terminus: Ribosomal protein uS12 methylthiotransferase RimO (447 aa).

The MTTase N-terminal domain maps to 6–122; it reads EKVSMVSLGC…IAEIIEEKSS (117 aa). Residues Cys-15, Cys-51, Cys-85, Cys-160, Cys-164, and Cys-167 each coordinate [4Fe-4S] cluster. The region spanning 146-376 is the Radical SAM core domain; the sequence is SSPAYTAYLK…MKAQARVSFK (231 aa). The 69-residue stretch at 379–447 folds into the TRAM domain; it reads RRLIDTEEQV…DYDLIGEIIS (69 aa).

It belongs to the methylthiotransferase family. RimO subfamily. [4Fe-4S] cluster serves as cofactor.

It is found in the cytoplasm. The enzyme catalyses L-aspartate(89)-[ribosomal protein uS12]-hydrogen + (sulfur carrier)-SH + AH2 + 2 S-adenosyl-L-methionine = 3-methylsulfanyl-L-aspartate(89)-[ribosomal protein uS12]-hydrogen + (sulfur carrier)-H + 5'-deoxyadenosine + L-methionine + A + S-adenosyl-L-homocysteine + 2 H(+). Functionally, catalyzes the methylthiolation of an aspartic acid residue of ribosomal protein uS12. The chain is Ribosomal protein uS12 methylthiotransferase RimO from Geobacter sulfurreducens (strain ATCC 51573 / DSM 12127 / PCA).